Here is a 447-residue protein sequence, read N- to C-terminus: MALLQFGGTLAPKLGEKPQLLPRSPALTRVIYADPRFLVSKSGSGGRLKHLVSPTASLQSRTSSRLFNHAPSPRFRHRRSSRFIVRADADFYSTLGVSRNASKSEIKSAYRKLARSYHPDVNKDPGAEQKFKDISNAYEVLSDDEKRSIYDKYGEAGLKGAGMGTGDYSNPFDLFESLFEGFGGMGGMGGRAARNRPMQGDDEAYNLVLNFKEAVFGVEKEIEITRLEGCNTCDGTGAKPGTKPTTCKTCGGQGQVVSSTRTPLGIFQQVSTCNTCGGTGEFSTPCNTCGGDGRVRKTKRISLKVPAGVDSGSRLRVRSEGNAGRRGGPPGDLYVFIDVLSDPVLKRDGTNILYTCKVSYIDAILGTTVKVPTVDGMVDLKIPSGTQPGTTLVMSKKGVPLLGKSNARGDQLVRVQVEIPKRLSSDERKLIEELANLNKAQTANSRR.

A chloroplast-targeting transit peptide spans 1–86 (MALLQFGGTL…HRRSSRFIVR (86 aa)). In terms of domain architecture, J spans 90 to 154 (DFYSTLGVSR…EKRSIYDKYG (65 aa)). Residues 217–298 (GVEKEIEITR…CGGDGRVRKT (82 aa)) form a CR-type zinc finger. Zn(2+) is bound by residues C230, C233, C247, C250, C273, C276, C286, and C289. CXXCXGXG motif repeat units lie at residues 230–237 (CNTCDGTG), 247–254 (CKTCGGQG), 273–280 (CNTCGGTG), and 286–293 (CNTCGGDG).

It belongs to the DnaJ family. As to quaternary structure, interacts with PCNA. As to expression, expressed in roots, stems, leaves and panicles.

It localises to the plastid. Its subcellular location is the chloroplast. In terms of biological role, plays pivotal roles in chloroplast development. Is essential for the regulation of chloroplast development and differentiation. This Oryza sativa subsp. japonica (Rice) protein is Chaperone protein dnaJ A7B, chloroplastic.